We begin with the raw amino-acid sequence, 421 residues long: MSQLIDRRQNAGKKSTVNRQRFLRRYKSQIKKAVSEAVGKRSITEIDQGEQITIPAKDIYEPQFHRGHGGHIERVLPGNDNFIAGDRIKRPGGGGSGGAGGNASDSGEGEDNFVFELSREEFLELYFEDLELPDLVKKELARISTYKTVRAGVTTSGIPNNINVLRSMKQATGRRVALASPYKRRLKEAEEELERLKQLANPDKLDILKLERDIEFFKKKIQTVPFVDTIDLRYNHRVRVPSPSTQAVMFCVMDVSGSMDEAKKDIAKRFFILLYMFLTKNYEKIELVFIRHHTSAKEVNEEEFFYSRETGGTVVSSALELLNTIIEARYPPQAWNIYVAQASDGDNWNADSPYCQELLQEKIMPLLQYFAYIEIMPRHHQSLWEVYQQVKERYPNFAMENIDNVADIYPVFRELFKRKTV.

Residues 83–110 form a disordered region; it reads IAGDRIKRPGGGGSGGAGGNASDSGEGE. Positions 91-101 are enriched in gly residues; the sequence is PGGGGSGGAGG.

It belongs to the UPF0229 family.

In Legionella pneumophila (strain Lens), this protein is UPF0229 protein lpl2726.